A 447-amino-acid polypeptide reads, in one-letter code: 1-aminocyclopropane-1-carboxylate synthase 7 (447 aa).

Positions 61 and 100 each coordinate substrate. Position 285 is an N6-(pyridoxal phosphate)lysine (Lys285).

Belongs to the class-I pyridoxal-phosphate-dependent aminotransferase family. As to quaternary structure, homodimer and heterodimer. In vivo, the relevance of heterodimerization with other ACS enzymes is however unsure. Interacts with XBAT32. Pyridoxal 5'-phosphate is required as a cofactor. In terms of processing, ubiquitinated by XBAT32. Ubiquitination probably leads to its subsequent degradation, thus controlling ethylene production. Expressed in roots.

It catalyses the reaction S-adenosyl-L-methionine = 1-aminocyclopropane-1-carboxylate + S-methyl-5'-thioadenosine + H(+). The protein operates within alkene biosynthesis; ethylene biosynthesis via S-adenosyl-L-methionine; ethylene from S-adenosyl-L-methionine: step 1/2. Its function is as follows. 1-aminocyclopropane-1-carboxylate synthase (ACS) enzymes catalyze the conversion of S-adenosyl-L-methionine (SAM) into 1-aminocyclopropane-1-carboxylate (ACC), a direct precursor of ethylene. The chain is 1-aminocyclopropane-1-carboxylate synthase 7 (ACS7) from Arabidopsis thaliana (Mouse-ear cress).